The following is a 413-amino-acid chain: Serine hydroxymethyltransferase (413 aa).

(6S)-5,6,7,8-tetrahydrofolate-binding positions include leucine 120 and 124–126 (GHL). Lysine 229 carries the post-translational modification N6-(pyridoxal phosphate)lysine. Position 352–354 (352–354 (SPF)) interacts with (6S)-5,6,7,8-tetrahydrofolate.

It belongs to the SHMT family. Homodimer. Pyridoxal 5'-phosphate is required as a cofactor.

Its subcellular location is the cytoplasm. The catalysed reaction is (6R)-5,10-methylene-5,6,7,8-tetrahydrofolate + glycine + H2O = (6S)-5,6,7,8-tetrahydrofolate + L-serine. It functions in the pathway one-carbon metabolism; tetrahydrofolate interconversion. It participates in amino-acid biosynthesis; glycine biosynthesis; glycine from L-serine: step 1/1. In terms of biological role, catalyzes the reversible interconversion of serine and glycine with tetrahydrofolate (THF) serving as the one-carbon carrier. This reaction serves as the major source of one-carbon groups required for the biosynthesis of purines, thymidylate, methionine, and other important biomolecules. Also exhibits THF-independent aldolase activity toward beta-hydroxyamino acids, producing glycine and aldehydes, via a retro-aldol mechanism. In Heliobacterium modesticaldum (strain ATCC 51547 / Ice1), this protein is Serine hydroxymethyltransferase.